The primary structure comprises 341 residues: Brain-specific homeobox/POU domain protein 3 (341 aa).

The POU-IV box signature appears at 55 to 65 (RGAEALAAVDI). The region spanning 182-259 (ETETDPRELE…ILEAWLEEAE (78 aa)) is the POU-specific domain. The segment at residues 277–336 (KKRKRTSIAAPEKRSLEAYFAVQPRPSSEKIAAIAEKLDLKKNVVRVWFCNQRQKQKRMK) is a DNA-binding region (homeobox).

Belongs to the POU transcription factor family. Class-4 subfamily.

It localises to the nucleus. In terms of biological role, may play a role in specifying terminally differentiated neuronal phenotypes. The chain is Brain-specific homeobox/POU domain protein 3 (BRN3) from Gallus gallus (Chicken).